Consider the following 137-residue polypeptide: Large ribosomal subunit protein uL16 (137 aa).

It belongs to the universal ribosomal protein uL16 family. As to quaternary structure, part of the 50S ribosomal subunit.

Binds 23S rRNA and is also seen to make contacts with the A and possibly P site tRNAs. In Leuconostoc citreum (strain KM20), this protein is Large ribosomal subunit protein uL16.